The following is a 156-amino-acid chain: MPRRRVIGQRKILPDPKFGSELLAKFVNILMVDGKKSTAETIVYNALETLAQRSGKNELEAFEVALDNVRPTVEVKSRRVGGSTYQVPVEVRPVRRNALAMRWIVEAARKRGDKSMALRLANELSDAAENKGTAVKKREDVHRMAEANKAFAHYRW.

This sequence belongs to the universal ribosomal protein uS7 family. As to quaternary structure, part of the 30S ribosomal subunit. Contacts proteins S9 and S11.

Functionally, one of the primary rRNA binding proteins, it binds directly to 16S rRNA where it nucleates assembly of the head domain of the 30S subunit. Is located at the subunit interface close to the decoding center, probably blocks exit of the E-site tRNA. The chain is Small ribosomal subunit protein uS7 from Erwinia tasmaniensis (strain DSM 17950 / CFBP 7177 / CIP 109463 / NCPPB 4357 / Et1/99).